The following is a 174-amino-acid chain: Transmembrane protein 208 (174 aa).

The next 3 helical transmembrane spans lie at 30-50, 54-74, and 111-131; these read NMAI…FEVT, VFMH…MAFM, and GTLL…LAPI. Residues 151-174 are disordered; sequence AQDDNPQVDEKKQKKMDRRMRRMR. Positions 163-174 are enriched in basic residues; that stretch reads QKKMDRRMRRMR.

The protein belongs to the TMEM208 family. In terms of assembly, interacts with fz. In terms of tissue distribution, expressed in the brain.

The protein localises to the endoplasmic reticulum membrane. Functionally, may play an important role during development and helps to maintain proper levels of Fz. This is Transmembrane protein 208 from Drosophila melanogaster (Fruit fly).